Consider the following 256-residue polypeptide: Fat body protein 2 (256 aa).

Residue 10–34 coordinates NAD(+); it reads VYVGSFSGIGWQMMMQLMQKDIKMM. S138 lines the substrate pocket. Y151 functions as the Proton acceptor in the catalytic mechanism.

The protein belongs to the short-chain dehydrogenases/reductases (SDR) family.

This Drosophila melanogaster (Fruit fly) protein is Fat body protein 2 (Fbp2).